The chain runs to 293 residues: Elongation factor Ts (293 aa).

Positions 80–83 (TDFV) are involved in Mg(2+) ion dislocation from EF-Tu.

It belongs to the EF-Ts family.

The protein resides in the cytoplasm. Functionally, associates with the EF-Tu.GDP complex and induces the exchange of GDP to GTP. It remains bound to the aminoacyl-tRNA.EF-Tu.GTP complex up to the GTP hydrolysis stage on the ribosome. This chain is Elongation factor Ts, found in Burkholderia ambifaria (strain MC40-6).